Here is a 218-residue protein sequence, read N- to C-terminus: DNA-binding protein HU 2 (218 aa).

The bacterial histone-like domain stretch occupies residues 1 to 91; sequence MNKAQLVEAI…QGFKDLVSGS (91 aa). The interval 101-218 is disordered; that stretch reads VKKAPKGSLS…TAKKATARKK (118 aa). Residues 118 to 218 form a degenerate repeats region region; that stretch reads KAAGKKAAAK…TAKKATARKK (101 aa). The segment covering 127–161 has biased composition (low complexity); that stretch reads KKATGAAKKTTGAAKKTSAAAKKTTAKKTTGAAKT. Residues 162-172 show a composition bias toward basic residues; sequence TAKKTTAKKSA. Low complexity predominate over residues 173 to 182; the sequence is AKTTTAAAKK. Over residues 183 to 218 the composition is skewed to basic residues; the sequence is TAAKKAPAKKATAKKAPAKKSTARKTTAKKATARKK.

This sequence belongs to the bacterial histone-like protein family. Long actinobacterial subfamily. Homodimer.

It localises to the cytoplasm. Its subcellular location is the nucleoid. Its function is as follows. Histone-like DNA-binding protein which is capable of wrapping DNA to stabilize it, and thus to prevent its denaturation under extreme environmental conditions. The protein is DNA-binding protein HU 2 (hup2) of Streptomyces coelicolor (strain ATCC BAA-471 / A3(2) / M145).